Consider the following 238-residue polypeptide: Transmembrane protein 127 (238 aa).

At Met-1 the chain carries N-acetylmethionine. Over residues 1 to 11 the composition is skewed to gly residues; sequence MYAPGGAGLPG. The tract at residues 1-27 is disordered; that stretch reads MYAPGGAGLPGGRRRRSPGGSALPKQP. Ser-17 is subject to Phosphoserine. A run of 3 helical transmembrane segments spans residues 96 to 116, 130 to 150, and 169 to 189; these read IAAF…LDVF, AFAH…SYWA, and VYVT…ASIL.

The protein belongs to the TMEM127 family. In terms of tissue distribution, widely expressed.

It is found in the cell membrane. Its subcellular location is the cytoplasm. Its function is as follows. Controls cell proliferation acting as a negative regulator of TOR signaling pathway mediated by mTORC1. May act as a tumor suppressor. The polypeptide is Transmembrane protein 127 (TMEM127) (Homo sapiens (Human)).